The chain runs to 226 residues: ATP synthase F(0) complex subunit a (226 aa).

The next 6 helical transmembrane spans lie at 12–32 (PTVL…LLVP), 68–88 (WSLM…LGLF), 97–117 (QLSM…AMGL), 138–158 (IPML…ALAV), 164–184 (ITAG…MLTI), and 189–209 (TLIT…VALI).

The protein belongs to the ATPase A chain family. As to quaternary structure, component of the ATP synthase complex composed at least of ATP5F1A/subunit alpha, ATP5F1B/subunit beta, ATP5MC1/subunit c (homooctomer), MT-ATP6/subunit a, MT-ATP8/subunit 8, ATP5ME/subunit e, ATP5MF/subunit f, ATP5MG/subunit g, ATP5MK/subunit k, ATP5MJ/subunit j, ATP5F1C/subunit gamma, ATP5F1D/subunit delta, ATP5F1E/subunit epsilon, ATP5PF/subunit F6, ATP5PB/subunit b, ATP5PD/subunit d, ATP5PO/subunit OSCP. ATP synthase complex consists of a soluble F(1) head domain (subunits alpha(3) and beta(3)) - the catalytic core - and a membrane F(0) domain - the membrane proton channel (subunits c, a, 8, e, f, g, k and j). These two domains are linked by a central stalk (subunits gamma, delta, and epsilon) rotating inside the F1 region and a stationary peripheral stalk (subunits F6, b, d, and OSCP). Interacts with DNAJC30; interaction is direct.

Its subcellular location is the mitochondrion inner membrane. The catalysed reaction is H(+)(in) = H(+)(out). Subunit a, of the mitochondrial membrane ATP synthase complex (F(1)F(0) ATP synthase or Complex V) that produces ATP from ADP in the presence of a proton gradient across the membrane which is generated by electron transport complexes of the respiratory chain. ATP synthase complex consist of a soluble F(1) head domain - the catalytic core - and a membrane F(1) domain - the membrane proton channel. These two domains are linked by a central stalk rotating inside the F(1) region and a stationary peripheral stalk. During catalysis, ATP synthesis in the catalytic domain of F(1) is coupled via a rotary mechanism of the central stalk subunits to proton translocation. With the subunit c (ATP5MC1), forms the proton-conducting channel in the F(0) domain, that contains two crucial half-channels (inlet and outlet) that facilitate proton movement from the mitochondrial intermembrane space (IMS) into the matrix. Protons are taken up via the inlet half-channel and released through the outlet half-channel, following a Grotthuss mechanism. The chain is ATP synthase F(0) complex subunit a from Pongo pygmaeus (Bornean orangutan).